We begin with the raw amino-acid sequence, 159 residues long: Early E3 18.5 kDa glycoprotein (159 aa).

A signal peptide spans 1 to 17 (MRYMILGLLALAAVCSA). Residues 18 to 123 (AKKVEFKEPA…PPQKCLENTG (106 aa)) are Lumenal-facing. 2 disulfide bridges follow: cysteine 28–cysteine 45 and cysteine 39–cysteine 100. Asparagine 29 and asparagine 78 each carry an N-linked (GlcNAc...) asparagine; by host glycan. Residues 124 to 144 (TFCSTALLITALALVCTLLYL) form a helical membrane-spanning segment. Residues 145–159 (KYKSRRSFIDEKKMP) are Cytoplasmic-facing. A Di-lysine motif motif is present at residues 156–159 (KKMP).

The protein belongs to the adenoviridae E19 family. Both disulfide bonds are absolutely critical for the interaction with MHC antigens. In terms of processing, N-glycosylated; high-mannose.

It localises to the host endoplasmic reticulum membrane. Binds and retains class I heavy chains in the endoplasmic reticulum during the early period of virus infection, thereby impairing their transport to the cell surface. Also delays the expression of class I alleles that it cannot affect by direct retention. Binds transporters associated with antigen processing (TAP) and acts as a tapasin inhibitor, preventing class I/TAP association. In consequence, infected cells are masked for immune recognition by cytotoxic T-lymphocytes. This is Early E3 18.5 kDa glycoprotein from Homo sapiens (Human).